The following is a 219-amino-acid chain: Redox-sensing transcriptional repressor Rex (219 aa).

The H-T-H motif DNA-binding region spans 17-56 (LYYRIFKRFHRENIVKTSSKQIAEAIGIDPATVRRDFSYF). Residue 91–96 (GVGNIG) coordinates NAD(+).

This sequence belongs to the transcriptional regulatory Rex family. Homodimer.

Its subcellular location is the cytoplasm. Functionally, modulates transcription in response to changes in cellular NADH/NAD(+) redox state. This is Redox-sensing transcriptional repressor Rex from Streptococcus thermophilus (strain ATCC BAA-491 / LMD-9).